The chain runs to 203 residues: Protein GrpE (203 aa).

This sequence belongs to the GrpE family. Homodimer.

The protein localises to the cytoplasm. In terms of biological role, participates actively in the response to hyperosmotic and heat shock by preventing the aggregation of stress-denatured proteins, in association with DnaK and GrpE. It is the nucleotide exchange factor for DnaK and may function as a thermosensor. Unfolded proteins bind initially to DnaJ; upon interaction with the DnaJ-bound protein, DnaK hydrolyzes its bound ATP, resulting in the formation of a stable complex. GrpE releases ADP from DnaK; ATP binding to DnaK triggers the release of the substrate protein, thus completing the reaction cycle. Several rounds of ATP-dependent interactions between DnaJ, DnaK and GrpE are required for fully efficient folding. The chain is Protein GrpE from Pseudoalteromonas translucida (strain TAC 125).